Reading from the N-terminus, the 151-residue chain is Small ribosomal subunit protein uS15 (151 aa).

The protein belongs to the universal ribosomal protein uS15 family.

This chain is Small ribosomal subunit protein uS15 (RpS13), found in Spodoptera frugiperda (Fall armyworm).